Reading from the N-terminus, the 177-residue chain is MDTPDSASRVFCGRFLSMVNTDDVNAIILAQKNMLDRFEKTNEMLLNFNNLSSVRLQQMSERFMHHTRTLVDMKRDLDSIFRRIRTLKGKLARQHPEAFSHIPEGSLLEDEDEDPVPPSITTTIATSEQSTGSCDTSPDTASPSFSPGFEDLSHIRPGSPAINGHSQTDDEEETREE.

M1 bears the N-acetylmethionine mark. The segment at 92–177 (ARQHPEAFSH…TDDEEETREE (86 aa)) is disordered. Residues 119-145 (SITTTIATSEQSTGSCDTSPDTASPSF) show a composition bias toward polar residues.

This sequence belongs to the KXD1 family. As to quaternary structure, component of the BLOC-one-related complex (BORC) which is composed of BLOC1S1, BLOC1S2, BORCS5, BORCS6, BORCS7, BORCS8, KXD1 and SNAPIN. Associates with the BLOC-1 complex. Interacts with BLOC1S1. Interacts with DTNBP1/BLOC1S7 (via coiled-coil domain).

The protein localises to the lysosome membrane. As part of the BORC complex may play a role in lysosomes movement and localization at the cell periphery. Associated with the cytosolic face of lysosomes, the BORC complex may recruit ARL8B and couple lysosomes to microtubule plus-end-directed kinesin motor. May also be involved in the biogenesis of lysosome-related organelles such as melanosomes. This Rattus norvegicus (Rat) protein is KxDL motif-containing protein 1 (Kxd1).